We begin with the raw amino-acid sequence, 88 residues long: Small ribosomal subunit protein bS20 (88 aa).

The disordered stretch occupies residues 1-27 (MANSKSAKKRALQSEKRRQHNASRRSM).

It belongs to the bacterial ribosomal protein bS20 family.

Its function is as follows. Binds directly to 16S ribosomal RNA. The sequence is that of Small ribosomal subunit protein bS20 from Shewanella frigidimarina (strain NCIMB 400).